We begin with the raw amino-acid sequence, 253 residues long: Endonuclease NucS (253 aa).

The interval 63–91 (IDDPDTDFTDGSSVGNSEEQGTDGSAHTA) is disordered. The span at 71-87 (TDGSSVGNSEEQGTDGS) shows a compositional bias: polar residues.

The protein belongs to the NucS endonuclease family.

It is found in the cytoplasm. Functionally, cleaves both 3' and 5' ssDNA extremities of branched DNA structures. In Corynebacterium kroppenstedtii (strain DSM 44385 / JCM 11950 / CIP 105744 / CCUG 35717), this protein is Endonuclease NucS.